The primary structure comprises 251 residues: Ribosome maturation factor RimP (251 aa).

The disordered stretch occupies residues 176 to 251 (SLRRGSAPPQ…ARLKNRDTLH (76 aa)). Positions 186–196 (DGEEGDEEEGA) are enriched in acidic residues. Over residues 216–226 (PKLDKKSDKPV) the composition is skewed to basic and acidic residues.

This sequence belongs to the RimP family.

It localises to the cytoplasm. Its function is as follows. Required for maturation of 30S ribosomal subunits. The polypeptide is Ribosome maturation factor RimP (Methylorubrum extorquens (strain PA1) (Methylobacterium extorquens)).